The following is a 466-amino-acid chain: Probable periplasmic serine protease do/HhoA-like (466 aa).

The N-terminal stretch at 1-29 (MKKTRFVLNSIALGLSVLSTSFVAHVAQA) is a signal peptide. Residues histidine 120, aspartate 150, and serine 226 each act as charge relay system in the active site. 2 PDZ domains span residues 270-361 (ILEF…LRDG) and 367-458 (KMKL…LRGD).

The protein belongs to the peptidase S1C family.

Its subcellular location is the periplasm. The chain is Probable periplasmic serine protease do/HhoA-like from Haemophilus influenzae (strain ATCC 51907 / DSM 11121 / KW20 / Rd).